We begin with the raw amino-acid sequence, 297 residues long: 4-diphosphocytidyl-2-C-methyl-D-erythritol kinase (297 aa).

Residue lysine 6 is part of the active site. 94-104 (PVAGGMAGGSA) is a binding site for ATP. The active site involves aspartate 136.

The protein belongs to the GHMP kinase family. IspE subfamily.

The enzyme catalyses 4-CDP-2-C-methyl-D-erythritol + ATP = 4-CDP-2-C-methyl-D-erythritol 2-phosphate + ADP + H(+). Its pathway is isoprenoid biosynthesis; isopentenyl diphosphate biosynthesis via DXP pathway; isopentenyl diphosphate from 1-deoxy-D-xylulose 5-phosphate: step 3/6. Catalyzes the phosphorylation of the position 2 hydroxy group of 4-diphosphocytidyl-2C-methyl-D-erythritol. The protein is 4-diphosphocytidyl-2-C-methyl-D-erythritol kinase of Nocardioides sp. (strain ATCC BAA-499 / JS614).